Here is a 402-residue protein sequence, read N- to C-terminus: Subtilisin-like protease 9 (402 aa).

The first 18 residues, 1-18 (MGFFRILFSLSLCALSLA), serve as a signal peptide directing secretion. Residues 19-120 (IPSKLIGLEN…VEVDRVVKLD (102 aa)) constitute a propeptide that is removed on maturation. The 84-residue stretch at 36-119 (SYIVVMKSAV…YVEVDRVVKL (84 aa)) folds into the Inhibitor I9 domain. One can recognise a Peptidase S8 domain in the interval 130-402 (SWGLGRISHR…KKLLYNGSGA (273 aa)). Residues D162 and H193 each act as charge relay system in the active site. A glycan (N-linked (GlcNAc...) asparagine) is linked at N254. S348 acts as the Charge relay system in catalysis. Residues N390 and N398 are each glycosylated (N-linked (GlcNAc...) asparagine).

It belongs to the peptidase S8 family.

It localises to the secreted. In terms of biological role, secreted subtilisin-like serine protease with keratinolytic activity that contributes to pathogenicity. The sequence is that of Subtilisin-like protease 9 (SUB9) from Arthroderma gypseum (strain ATCC MYA-4604 / CBS 118893) (Microsporum gypseum).